We begin with the raw amino-acid sequence, 127 residues long: Glycine cleavage system H protein (127 aa).

In terms of domain architecture, Lipoyl-binding spans 22-104 (KVRIGITDFA…YEKAWMIVIE (83 aa)). An N6-lipoyllysine modification is found at Lys63.

It belongs to the GcvH family. In terms of assembly, the glycine cleavage system is composed of four proteins: P, T, L and H. It depends on (R)-lipoate as a cofactor.

Its function is as follows. The glycine cleavage system catalyzes the degradation of glycine. The H protein shuttles the methylamine group of glycine from the P protein to the T protein. Functionally, is also involved in protein lipoylation via its role as an octanoyl/lipoyl carrier protein intermediate. The protein is Glycine cleavage system H protein of Geobacillus thermodenitrificans (strain NG80-2).